A 1073-amino-acid chain; its full sequence is MEGKKKRPLFFLLVLLLSHKANNVLFERMNGILLLECENEYVKNENGYKLATGHHYMDNDQIEQWLQGTDRSRRVKIEENVKYKYNVEELNTKYEQMKAPRINRILKESTYEAQNVADNNYIDDKANGEHKTDNKTNKGEGARNMVMLDYDISGSGQPDGIIDNVVELGTEDEGNFLENSSKGGDHPYRMNRKERMSNGVINQTFLQNNVMDKCNDKRKRGERDWDCPAEKDICISVRRYQLCMKGLTNLVNNTRTHSHNDITFLKLNLKRKLMYDAAVEGDLLLKKNNYQYNKEFCKDIRWGLGDFGDIIMGTNMEGIGYSQVVENNLRQVFGTDEKAKQDRKQWWNESKEHIWRAMMFSIRSRLKEKFVWICKKDVTLKVEPQIYRWIREWGRDYMSKLPKEQGKLNEKCASKLYYNNMAICMLPLCHDACKSYDQWITRKKKQWDVLSTKFSSVKKTQKIGTENIATAYDILKQELNGFKEATFENEINKRDNLYNHLCPCVVEEARKNTQENVKNVGSGVESKAASSNPITEAVKSSSGEGKVQEDSAHKSVNKGEGKSSTNEADPGSQSGAPASRSVDEKAGVPALSAGQGHDKVPPAEAAATESAVLHSADKTPNTVTEENKEGTQMDGAAGGDGKAPGPTVSSDVPSVGGKDSGPSTSASHALAGENGEVHNGTDTEPKEDGEKADPQKDIEVKGKQDTDDRSQGSLGPHTDERATLGETHMEKDTETAGGSTLTPEQNVSVASDNGNVPGSGNKQNEGATALSGAESLKSNESVHKTIDNTTHGLENKNGGNEKDFQKHDFMNNDMLNDQASSDHTSSDQTSSDHTSSDQTSSDHTSSDHTSSDQTSSDQTSSDQTIDTEGHHRDNVRNPEIKSSEDMSKGDFMRNSNSNELYSHNNLNNRKLNRDQYEHRDVKATREKIILMSEVNKCNNRASVKYCNTIEDRMLSSTCSRERRKNLCCSISDFCLNYFELYSYEFYNCMKKEFEDPSYECFTKGSSTGIVYFATGGAFLIILLLFASWNAASNDYEEEATFDEFVEYSDDIHRTPLMPNDIEHMQQFTPLDYS.

A signal peptide spans 1-21 (MEGKKKRPLFFLLVLLLSHKA). Residues 22-1007 (NNVLFERMNG…YECFTKGSST (986 aa)) lie on the Extracellular side of the membrane. Residues N134, N179, and N202 are each glycosylated (N-linked (GlcNAc...) asparagine). 2 cysteine pairs are disulfide-bonded: C214-C243 and C227-C234. N-linked (GlcNAc...) asparagine glycans are attached at residues N252 and N348. Intrachain disulfides connect C297–C374, C412–C429, C424–C504, and C433–C502. A disordered region spans residues 517 to 915 (VKNVGSGVES…LNNRKLNRDQ (399 aa)). Residues 528-543 (AASSNPITEAVKSSSG) are compositionally biased toward polar residues. A compositionally biased stretch (basic and acidic residues) spans 546–561 (KVQEDSAHKSVNKGEG). Residues 562–576 (KSSTNEADPGSQSGA) are compositionally biased toward polar residues. 2 stretches are compositionally biased toward basic and acidic residues: residues 675 to 710 (GEVH…DDRS) and 717 to 734 (HTDE…KDTE). A glycan (N-linked (GlcNAc...) asparagine) is linked at N679. Residues 736 to 766 (AGGSTLTPEQNVSVASDNGNVPGSGNKQNEG) show a composition bias toward polar residues. Residues N746, N779, and N788 are each glycosylated (N-linked (GlcNAc...) asparagine). Basic and acidic residues predominate over residues 799-810 (GNEKDFQKHDFM). Low complexity-rich tracts occupy residues 821 to 843 (SDHT…SSDH) and 851 to 864 (SDQT…SDQT). Positions 867–891 (TEGHHRDNVRNPEIKSSEDMSKGDF) are enriched in basic and acidic residues. Positions 893–909 (RNSNSNELYSHNNLNNR) are enriched in polar residues. Residues 1008 to 1029 (GIVYFATGGAFLIILLLFASWN) traverse the membrane as a helical segment. Topologically, residues 1030-1073 (AASNDYEEEATFDEFVEYSDDIHRTPLMPNDIEHMQQFTPLDYS) are cytoplasmic.

Interacts (via region II) with human ACKR1 (via N-terminal extracellular domain). Interacts (via region II) with rhesus macaque ACKR1 (via N-terminal extracellular domain).

The protein localises to the cell membrane. Its subcellular location is the cytoplasmic vesicle. The protein resides in the secretory vesicle. It is found in the microneme. Its function is as follows. Binds to the human erythrocyte Duffy blood group determinant (ACKR1). Binds to the rhesus macaque erythrocyte Duffy blood group determinant (ACKR1). The sequence is that of Duffy receptor alpha form from Plasmodium knowlesi.